The following is a 601-amino-acid chain: MEFKVIAEYFDKLEKISSRLQLTALLADLLSKSDKAIIDKVVYIIQGKLWPDFLGYPELGIGEKFLIKAISIATNTDENSVENLYKSTGDLGEVARRLKSKQQSTGILGFLGTSSKESLTVDEVYSTLSKVALTTGEGSRDLKIRLLAGLLKKADPLEAKFLVRFVEGRLRVGIGDATVLDAMAIAFGGGQSASEIVERAYNLRADLGNIAKIIVEKGIEALKTLKPEVGIPIRPMLAERLSNPEEILKKVGGSALVDYKYDGERAQIHKKSDKIFIFSRRLENITSQYPDVVEYISKYVEGKEFIIEGEIVAVDPESGEMRAFQELMHRKRKSDIYEAIKEYPVNVFLFDLMYYEDVDYTTKPLEVRRKLLESIVKPNDYVKIAHHIQVNNVEDLKSFFYRAISEGGEGVMVKAIGKDAIYQAGARGWLWIKLKRDYQSEMADTVDLVVVGGFYGKGKRGGKISSLLMAAYNPKTDTFESVCKVASGFSDEQLDELQKKLMEIKRDIKHPRVNSKMEPDIWIEPVYVAEIIGAEITISPLHTCCQDVVEKDAGLSIRFPRFIRWRDDKSPEDATTTDEILEMYNKQPKKKIESPLVDESV.

D258 is a binding site for ATP. The active-site N6-AMP-lysine intermediate is the K260. R265, R280, E310, F350, R427, and K433 together coordinate ATP.

Belongs to the ATP-dependent DNA ligase family. Mg(2+) is required as a cofactor. Ca(2+) serves as cofactor. It depends on Mn(2+) as a cofactor.

The enzyme catalyses ATP + (deoxyribonucleotide)n-3'-hydroxyl + 5'-phospho-(deoxyribonucleotide)m = (deoxyribonucleotide)n+m + AMP + diphosphate.. In terms of biological role, DNA ligase that seals nicks in double-stranded DNA during DNA replication, DNA recombination and DNA repair. Also has low activity with dATP. Inactive with NAD(+), CTP, GTP, UTP, dCTP, dGTP or dTTP. The polypeptide is DNA ligase (Saccharolobus shibatae (strain ATCC 51178 / DSM 5389 / JCM 8931 / NBRC 15437 / B12) (Sulfolobus shibatae)).